A 150-amino-acid chain; its full sequence is Large ribosomal subunit protein bL9 (150 aa).

It belongs to the bacterial ribosomal protein bL9 family.

Binds to the 23S rRNA. The sequence is that of Large ribosomal subunit protein bL9 from Shewanella baltica (strain OS223).